Consider the following 159-residue polypeptide: Disulfide bond formation protein B (159 aa).

The Cytoplasmic segment spans residues 1 to 8; sequence MQANSRAF. The helical transmembrane segment at 9–25 threads the bilayer; that stretch reads FLLIAVIAFGLVGYALY. Over 26-43 the chain is Periplasmic; the sequence is LQHVEGLQPCPLCVLQRF. Cysteines 35 and 38 form a disulfide. Residues 44–57 traverse the membrane as a helical segment; that stretch reads AFVGIGVFSLLAAL. Residues 58–63 are Cytoplasmic-facing; it reads SSATRL. A helical transmembrane segment spans residues 64–81; the sequence is LWHGLGMLSGLGGIFVAG. At 82–136 the chain is on the periplasmic side; it reads YHVSLLLNPKASCGIDPIENWVNALPTAKWLPQVFESDGLCTAPLPPVLGVSIPL. A disulfide bridge links Cys-94 with Cys-122. A helical membrane pass occupies residues 137–155; sequence WSLIWMVILALTLVVAMIR. Topologically, residues 156-159 are cytoplasmic; it reads RERR.

This sequence belongs to the DsbB family.

It is found in the cell inner membrane. In terms of biological role, required for disulfide bond formation in some periplasmic proteins. Acts by oxidizing the DsbA protein. The sequence is that of Disulfide bond formation protein B from Ralstonia nicotianae (strain ATCC BAA-1114 / GMI1000) (Ralstonia solanacearum).